Reading from the N-terminus, the 154-residue chain is 6,7-dimethyl-8-ribityllumazine synthase (154 aa).

Residues phenylalanine 22, 56 to 58, and 80 to 82 each bind 5-amino-6-(D-ribitylamino)uracil; these read AFE and AVI. Position 85-86 (85-86) interacts with (2S)-2-hydroxy-3-oxobutyl phosphate; that stretch reads ET. Histidine 88 (proton donor) is an active-site residue. Position 113 (phenylalanine 113) interacts with 5-amino-6-(D-ribitylamino)uracil. Arginine 127 contributes to the (2S)-2-hydroxy-3-oxobutyl phosphate binding site.

This sequence belongs to the DMRL synthase family.

It carries out the reaction (2S)-2-hydroxy-3-oxobutyl phosphate + 5-amino-6-(D-ribitylamino)uracil = 6,7-dimethyl-8-(1-D-ribityl)lumazine + phosphate + 2 H2O + H(+). It functions in the pathway cofactor biosynthesis; riboflavin biosynthesis; riboflavin from 2-hydroxy-3-oxobutyl phosphate and 5-amino-6-(D-ribitylamino)uracil: step 1/2. In terms of biological role, catalyzes the formation of 6,7-dimethyl-8-ribityllumazine by condensation of 5-amino-6-(D-ribitylamino)uracil with 3,4-dihydroxy-2-butanone 4-phosphate. This is the penultimate step in the biosynthesis of riboflavin. The chain is 6,7-dimethyl-8-ribityllumazine synthase from Thermoanaerobacter pseudethanolicus (strain ATCC 33223 / 39E) (Clostridium thermohydrosulfuricum).